The primary structure comprises 482 residues: UDP-N-acetylmuramoyl-L-alanyl-D-glutamate--2,6-diaminopimelate ligase (482 aa).

A UDP-N-acetyl-alpha-D-muramoyl-L-alanyl-D-glutamate-binding site is contributed by S30. 111 to 117 (GTNGKTT) is an ATP binding site. UDP-N-acetyl-alpha-D-muramoyl-L-alanyl-D-glutamate contacts are provided by residues 153–154 (TT), S180, Q186, and R188. Position 220 is an N6-carboxylysine (K220). Residues R378, 402–405 (DNPR), G455, and E459 each bind meso-2,6-diaminopimelate. Positions 402-405 (DNPR) match the Meso-diaminopimelate recognition motif motif.

Belongs to the MurCDEF family. MurE subfamily. Requires Mg(2+) as cofactor. Post-translationally, carboxylation is probably crucial for Mg(2+) binding and, consequently, for the gamma-phosphate positioning of ATP.

The protein localises to the cytoplasm. It catalyses the reaction UDP-N-acetyl-alpha-D-muramoyl-L-alanyl-D-glutamate + meso-2,6-diaminopimelate + ATP = UDP-N-acetyl-alpha-D-muramoyl-L-alanyl-gamma-D-glutamyl-meso-2,6-diaminopimelate + ADP + phosphate + H(+). The protein operates within cell wall biogenesis; peptidoglycan biosynthesis. Catalyzes the addition of meso-diaminopimelic acid to the nucleotide precursor UDP-N-acetylmuramoyl-L-alanyl-D-glutamate (UMAG) in the biosynthesis of bacterial cell-wall peptidoglycan. The polypeptide is UDP-N-acetylmuramoyl-L-alanyl-D-glutamate--2,6-diaminopimelate ligase (Bacteroides thetaiotaomicron (strain ATCC 29148 / DSM 2079 / JCM 5827 / CCUG 10774 / NCTC 10582 / VPI-5482 / E50)).